A 286-amino-acid polypeptide reads, in one-letter code: Pantothenate synthetase (286 aa).

ATP is bound at residue Met-30–His-37. The active-site Proton donor is the His-37. Residue Gln-61 participates in (R)-pantoate binding. Residue Gln-61 participates in beta-alanine binding. Gly-147 to Asp-150 is an ATP binding site. Gln-153 serves as a coordination point for (R)-pantoate. Residues Val-180 and Leu-188–Arg-191 contribute to the ATP site.

This sequence belongs to the pantothenate synthetase family. Homodimer.

Its subcellular location is the cytoplasm. It carries out the reaction (R)-pantoate + beta-alanine + ATP = (R)-pantothenate + AMP + diphosphate + H(+). Its pathway is cofactor biosynthesis; (R)-pantothenate biosynthesis; (R)-pantothenate from (R)-pantoate and beta-alanine: step 1/1. In terms of biological role, catalyzes the condensation of pantoate with beta-alanine in an ATP-dependent reaction via a pantoyl-adenylate intermediate. The chain is Pantothenate synthetase from Novosphingobium aromaticivorans (strain ATCC 700278 / DSM 12444 / CCUG 56034 / CIP 105152 / NBRC 16084 / F199).